We begin with the raw amino-acid sequence, 314 residues long: Homoserine kinase (314 aa).

96-106 (PIGSGLGSSAC) serves as a coordination point for ATP.

The protein belongs to the GHMP kinase family. Homoserine kinase subfamily.

Its subcellular location is the cytoplasm. The catalysed reaction is L-homoserine + ATP = O-phospho-L-homoserine + ADP + H(+). It participates in amino-acid biosynthesis; L-threonine biosynthesis; L-threonine from L-aspartate: step 4/5. Its function is as follows. Catalyzes the ATP-dependent phosphorylation of L-homoserine to L-homoserine phosphate. The sequence is that of Homoserine kinase from Haemophilus influenzae (strain 86-028NP).